A 372-amino-acid polypeptide reads, in one-letter code: Chaperone protein DnaJ (372 aa).

The J domain occupies 5-69 (DYYEVLGVSK…DKRKQYDQFG (65 aa)). A CR-type zinc finger spans residues 139 to 221 (GVDKIIELDL…CKGKGKYLER (83 aa)). 8 residues coordinate Zn(2+): C152, C155, C169, C172, C195, C198, C209, and C212. CXXCXGXG motif repeat units follow at residues 152-159 (CSACFGSG), 169-176 (CNNCHGTG), 195-202 (CNVCNGAG), and 209-216 (CKNCKGKG).

This sequence belongs to the DnaJ family. Homodimer. It depends on Zn(2+) as a cofactor.

Its subcellular location is the cytoplasm. Functionally, participates actively in the response to hyperosmotic and heat shock by preventing the aggregation of stress-denatured proteins and by disaggregating proteins, also in an autonomous, DnaK-independent fashion. Unfolded proteins bind initially to DnaJ; upon interaction with the DnaJ-bound protein, DnaK hydrolyzes its bound ATP, resulting in the formation of a stable complex. GrpE releases ADP from DnaK; ATP binding to DnaK triggers the release of the substrate protein, thus completing the reaction cycle. Several rounds of ATP-dependent interactions between DnaJ, DnaK and GrpE are required for fully efficient folding. Also involved, together with DnaK and GrpE, in the DNA replication of plasmids through activation of initiation proteins. The chain is Chaperone protein DnaJ from Mycoplasma capricolum subsp. capricolum (strain California kid / ATCC 27343 / NCTC 10154).